The primary structure comprises 356 residues: Heme A synthase (356 aa).

Helical transmembrane passes span 23–43 (IAIW…VGGV), 105–125 (FHRL…LYFL), 141–161 (IFLL…SGLV), 173–193 (AHLG…LDLL), and 212–232 (STML…VAGI). Histidine 274 contributes to the heme binding site. Transmembrane regions (helical) follow at residues 276 to 296 (LIAW…RAVP), 307 to 327 (LLLI…LLVV), and 329 to 349 (LTLA…ALWV). A heme-binding site is contributed by histidine 335.

It belongs to the COX15/CtaA family. Type 2 subfamily. As to quaternary structure, interacts with CtaB. Requires heme b as cofactor.

It is found in the cell membrane. The catalysed reaction is Fe(II)-heme o + 2 A + H2O = Fe(II)-heme a + 2 AH2. Its pathway is porphyrin-containing compound metabolism; heme A biosynthesis; heme A from heme O: step 1/1. Its function is as follows. Catalyzes the conversion of heme O to heme A by two successive hydroxylations of the methyl group at C8. The first hydroxylation forms heme I, the second hydroxylation results in an unstable dihydroxymethyl group, which spontaneously dehydrates, resulting in the formyl group of heme A. This chain is Heme A synthase, found in Nitrosospira multiformis (strain ATCC 25196 / NCIMB 11849 / C 71).